The primary structure comprises 115 residues: MNMIMVISVNIILSSTLILVAFWLPQLNIYTEKANPYECGFDPMSSARLPFSMKFFLVAITFLLFDLEIALLLPIPWAIQMPDMKTMMLTAFILVSILALGLAYEWTQKGLEWTE.

3 helical membrane-spanning segments follow: residues 4-24, 55-75, and 86-106; these read IMVI…AFWL, FFLV…LLPI, and TMML…AYEW.

This sequence belongs to the complex I subunit 3 family. Core subunit of respiratory chain NADH dehydrogenase (Complex I) which is composed of 45 different subunits. Interacts with TMEM186. Interacts with TMEM242.

It is found in the mitochondrion inner membrane. It carries out the reaction a ubiquinone + NADH + 5 H(+)(in) = a ubiquinol + NAD(+) + 4 H(+)(out). Functionally, core subunit of the mitochondrial membrane respiratory chain NADH dehydrogenase (Complex I) which catalyzes electron transfer from NADH through the respiratory chain, using ubiquinone as an electron acceptor. Essential for the catalytic activity of complex I. In Baiomys taylori (Northern pygmy mouse), this protein is NADH-ubiquinone oxidoreductase chain 3.